Consider the following 276-residue polypeptide: Probable endonuclease 4 (276 aa).

Zn(2+) is bound by residues His-66, His-106, Glu-141, Asp-175, His-178, His-210, Asp-223, His-225, and Glu-255.

Belongs to the AP endonuclease 2 family. Requires Zn(2+) as cofactor.

The enzyme catalyses Endonucleolytic cleavage to 5'-phosphooligonucleotide end-products.. Its function is as follows. Endonuclease IV plays a role in DNA repair. It cleaves phosphodiester bonds at apurinic or apyrimidinic (AP) sites, generating a 3'-hydroxyl group and a 5'-terminal sugar phosphate. This Heliobacterium modesticaldum (strain ATCC 51547 / Ice1) protein is Probable endonuclease 4.